The following is a 359-amino-acid chain: 3-isopropylmalate dehydrogenase (359 aa).

76–89 is an NAD(+) binding site; sequence GPKWDTIERSIRPE. Substrate is bound by residues Arg-96, Arg-106, Arg-134, and Asp-225. Mg(2+) is bound by residues Asp-225, Asp-249, and Asp-253. NAD(+) is bound at residue 283-295; that stretch reads GSAPDIAGQNVAN.

It belongs to the isocitrate and isopropylmalate dehydrogenases family. LeuB type 1 subfamily. Homodimer. Mg(2+) serves as cofactor. It depends on Mn(2+) as a cofactor.

It is found in the cytoplasm. The catalysed reaction is (2R,3S)-3-isopropylmalate + NAD(+) = 4-methyl-2-oxopentanoate + CO2 + NADH. It participates in amino-acid biosynthesis; L-leucine biosynthesis; L-leucine from 3-methyl-2-oxobutanoate: step 3/4. In terms of biological role, catalyzes the oxidation of 3-carboxy-2-hydroxy-4-methylpentanoate (3-isopropylmalate) to 3-carboxy-4-methyl-2-oxopentanoate. The product decarboxylates to 4-methyl-2 oxopentanoate. This chain is 3-isopropylmalate dehydrogenase, found in Acinetobacter baylyi (strain ATCC 33305 / BD413 / ADP1).